Here is a 236-residue protein sequence, read N- to C-terminus: uncharacterized protein (236 aa).

Residues 52 to 72 (FFPYIALFQIIMLIILLILYF) traverse the membrane as a helical segment. A disordered region spans residues 183 to 236 (SDKREHDDEELSFTTEMETITTETETSSTIPHLRSLPIKSESSMETTSEETDEE). Over residues 196 to 212 (TTEMETITTETETSSTI) the composition is skewed to low complexity.

It localises to the membrane. This is an uncharacterized protein from Acheta domesticus (House cricket).